The primary structure comprises 162 residues: NADH-quinone oxidoreductase subunit I (162 aa).

2 consecutive 4Fe-4S ferredoxin-type domains span residues Leu-53–Glu-83 and Thr-93–Val-122. [4Fe-4S] cluster-binding residues include Cys-63, Cys-66, Cys-69, Cys-73, Cys-102, Cys-105, Cys-108, and Cys-112.

It belongs to the complex I 23 kDa subunit family. NDH-1 is composed of 14 different subunits. Subunits NuoA, H, J, K, L, M, N constitute the membrane sector of the complex. It depends on [4Fe-4S] cluster as a cofactor.

It is found in the cell inner membrane. It catalyses the reaction a quinone + NADH + 5 H(+)(in) = a quinol + NAD(+) + 4 H(+)(out). NDH-1 shuttles electrons from NADH, via FMN and iron-sulfur (Fe-S) centers, to quinones in the respiratory chain. The immediate electron acceptor for the enzyme in this species is believed to be ubiquinone. Couples the redox reaction to proton translocation (for every two electrons transferred, four hydrogen ions are translocated across the cytoplasmic membrane), and thus conserves the redox energy in a proton gradient. The sequence is that of NADH-quinone oxidoreductase subunit I from Nitrosomonas europaea (strain ATCC 19718 / CIP 103999 / KCTC 2705 / NBRC 14298).